We begin with the raw amino-acid sequence, 388 residues long: S-adenosylmethionine synthase (388 aa).

His16 contributes to the ATP binding site. Position 18 (Asp18) interacts with Mg(2+). Glu44 contacts K(+). L-methionine contacts are provided by Glu57 and Gln100. A flexible loop region spans residues 100–110; the sequence is QSPEIAQGVDR. ATP is bound by residues 165 to 167, Asp240, 246 to 247, Ala263, and Lys267; these read DAK and RK. Residue Asp240 coordinates L-methionine. Lys271 is a binding site for L-methionine.

It belongs to the AdoMet synthase family. In terms of assembly, homotetramer; dimer of dimers. It depends on Mg(2+) as a cofactor. Requires K(+) as cofactor.

Its subcellular location is the cytoplasm. The catalysed reaction is L-methionine + ATP + H2O = S-adenosyl-L-methionine + phosphate + diphosphate. It functions in the pathway amino-acid biosynthesis; S-adenosyl-L-methionine biosynthesis; S-adenosyl-L-methionine from L-methionine: step 1/1. Its function is as follows. Catalyzes the formation of S-adenosylmethionine (AdoMet) from methionine and ATP. The overall synthetic reaction is composed of two sequential steps, AdoMet formation and the subsequent tripolyphosphate hydrolysis which occurs prior to release of AdoMet from the enzyme. The polypeptide is S-adenosylmethionine synthase (Acinetobacter baylyi (strain ATCC 33305 / BD413 / ADP1)).